The primary structure comprises 210 residues: Small ribosomal subunit protein bS6 (210 aa).

The disordered stretch occupies residues 99 to 210; the sequence is PLPTKRNTKS…KDTKEVKEEG (112 aa). A compositionally biased stretch (basic and acidic residues) spans 120–210; it reads NDTKEVKEAK…KDTKEVKEEG (91 aa).

This sequence belongs to the bacterial ribosomal protein bS6 family.

Its function is as follows. Binds together with bS18 to 16S ribosomal RNA. The chain is Small ribosomal subunit protein bS6 from Prochlorococcus marinus (strain SARG / CCMP1375 / SS120).